Consider the following 378-residue polypeptide: Chaperone protein DnaJ (378 aa).

The 65-residue stretch at 4-68 (DFYEILGVSR…ETRARYDRFG (65 aa)) folds into the J domain. The CR-type zinc-finger motif lies at 136–218 (GGEKEIRIPH…CGGAGRKQET (83 aa)). Cys-149, Cys-152, Cys-166, Cys-169, Cys-192, Cys-195, Cys-206, and Cys-209 together coordinate Zn(2+). CXXCXGXG motif repeat units follow at residues 149–156 (CKTCSGSG), 166–173 (CGTCNGTG), 192–199 (CPTCNGEG), and 206–213 (CESCGGAG).

Belongs to the DnaJ family. In terms of assembly, homodimer. The cofactor is Zn(2+).

It is found in the cytoplasm. Participates actively in the response to hyperosmotic and heat shock by preventing the aggregation of stress-denatured proteins and by disaggregating proteins, also in an autonomous, DnaK-independent fashion. Unfolded proteins bind initially to DnaJ; upon interaction with the DnaJ-bound protein, DnaK hydrolyzes its bound ATP, resulting in the formation of a stable complex. GrpE releases ADP from DnaK; ATP binding to DnaK triggers the release of the substrate protein, thus completing the reaction cycle. Several rounds of ATP-dependent interactions between DnaJ, DnaK and GrpE are required for fully efficient folding. Also involved, together with DnaK and GrpE, in the DNA replication of plasmids through activation of initiation proteins. This Picosynechococcus sp. (strain ATCC 27264 / PCC 7002 / PR-6) (Agmenellum quadruplicatum) protein is Chaperone protein DnaJ.